Reading from the N-terminus, the 670-residue chain is DNA ligase (670 aa).

Residues 32 to 36 (DSEYD), 81 to 82 (SL), and E114 contribute to the NAD(+) site. K116 functions as the N6-AMP-lysine intermediate in the catalytic mechanism. The NAD(+) site is built by R137, E174, K291, and K315. Zn(2+)-binding residues include C409, C412, C427, and C433. In terms of domain architecture, BRCT spans 592-670 (ASENLFKDKT…EEEFLAQITR (79 aa)).

This sequence belongs to the NAD-dependent DNA ligase family. LigA subfamily. Requires Mg(2+) as cofactor. The cofactor is Mn(2+).

It catalyses the reaction NAD(+) + (deoxyribonucleotide)n-3'-hydroxyl + 5'-phospho-(deoxyribonucleotide)m = (deoxyribonucleotide)n+m + AMP + beta-nicotinamide D-nucleotide.. Functionally, DNA ligase that catalyzes the formation of phosphodiester linkages between 5'-phosphoryl and 3'-hydroxyl groups in double-stranded DNA using NAD as a coenzyme and as the energy source for the reaction. It is essential for DNA replication and repair of damaged DNA. The chain is DNA ligase from Haemophilus influenzae (strain 86-028NP).